The primary structure comprises 430 residues: Adenylosuccinate synthetase (430 aa).

GTP contacts are provided by residues 12–18 (GDEGKGK) and 40–42 (GHT). The active-site Proton acceptor is the D13. Positions 13 and 40 each coordinate Mg(2+). IMP-binding positions include 13–16 (DEGK), 38–41 (NAGH), T130, R144, Q224, T239, and R303. H41 functions as the Proton donor in the catalytic mechanism. Residue 299-305 (TVTGRKR) participates in substrate binding. Residues R305, 331–333 (KLD), and 413–415 (STS) each bind GTP.

It belongs to the adenylosuccinate synthetase family. In terms of assembly, homodimer. The cofactor is Mg(2+).

It is found in the cytoplasm. It catalyses the reaction IMP + L-aspartate + GTP = N(6)-(1,2-dicarboxyethyl)-AMP + GDP + phosphate + 2 H(+). It functions in the pathway purine metabolism; AMP biosynthesis via de novo pathway; AMP from IMP: step 1/2. In terms of biological role, plays an important role in the de novo pathway of purine nucleotide biosynthesis. Catalyzes the first committed step in the biosynthesis of AMP from IMP. The protein is Adenylosuccinate synthetase of Cereibacter sphaeroides (strain ATCC 17029 / ATH 2.4.9) (Rhodobacter sphaeroides).